The sequence spans 382 residues: UDP-4-amino-4-deoxy-L-arabinose--oxoglutarate aminotransferase (382 aa).

Residue Lys-183 is modified to N6-(pyridoxal phosphate)lysine.

It belongs to the DegT/DnrJ/EryC1 family. ArnB subfamily. In terms of assembly, homodimer. Pyridoxal 5'-phosphate is required as a cofactor.

The enzyme catalyses UDP-4-amino-4-deoxy-beta-L-arabinose + 2-oxoglutarate = UDP-beta-L-threo-pentopyranos-4-ulose + L-glutamate. The protein operates within nucleotide-sugar biosynthesis; UDP-4-deoxy-4-formamido-beta-L-arabinose biosynthesis; UDP-4-deoxy-4-formamido-beta-L-arabinose from UDP-alpha-D-glucuronate: step 2/3. Its pathway is bacterial outer membrane biogenesis; lipopolysaccharide biosynthesis. Its function is as follows. Catalyzes the conversion of UDP-4-keto-arabinose (UDP-Ara4O) to UDP-4-amino-4-deoxy-L-arabinose (UDP-L-Ara4N). The modified arabinose is attached to lipid A and is required for resistance to polymyxin and cationic antimicrobial peptides. This is UDP-4-amino-4-deoxy-L-arabinose--oxoglutarate aminotransferase from Pseudomonas aeruginosa (strain ATCC 15692 / DSM 22644 / CIP 104116 / JCM 14847 / LMG 12228 / 1C / PRS 101 / PAO1).